The following is a 343-amino-acid chain: Holliday junction branch migration complex subunit RuvB (343 aa).

The tract at residues 1–26 (MKEKILTFSSDPSSPVTRHETEEDTG) is disordered. Residues 3 to 193 (EKILTFSSDP…FGIFRKFDFY (191 aa)) form a large ATPase domain (RuvB-L) region. Over residues 7-16 (TFSSDPSSPV) the composition is skewed to polar residues. ATP is bound by residues leucine 32, arginine 33, glycine 74, lysine 77, threonine 78, threonine 79, 140–142 (EDF), arginine 183, tyrosine 193, and arginine 230. Threonine 78 serves as a coordination point for Mg(2+). The interval 194–264 (SRQDLARIVS…AIDDALALEG (71 aa)) is small ATPAse domain (RuvB-S). The tract at residues 267 to 343 (EKGLTGLDRS…YRHLGVQWRG (77 aa)) is head domain (RuvB-H). The DNA site is built by arginine 322 and arginine 327.

Belongs to the RuvB family. In terms of assembly, homohexamer. Forms an RuvA(8)-RuvB(12)-Holliday junction (HJ) complex. HJ DNA is sandwiched between 2 RuvA tetramers; dsDNA enters through RuvA and exits via RuvB. An RuvB hexamer assembles on each DNA strand where it exits the tetramer. Each RuvB hexamer is contacted by two RuvA subunits (via domain III) on 2 adjacent RuvB subunits; this complex drives branch migration. In the full resolvosome a probable DNA-RuvA(4)-RuvB(12)-RuvC(2) complex forms which resolves the HJ.

It localises to the cytoplasm. It carries out the reaction ATP + H2O = ADP + phosphate + H(+). Its function is as follows. The RuvA-RuvB-RuvC complex processes Holliday junction (HJ) DNA during genetic recombination and DNA repair, while the RuvA-RuvB complex plays an important role in the rescue of blocked DNA replication forks via replication fork reversal (RFR). RuvA specifically binds to HJ cruciform DNA, conferring on it an open structure. The RuvB hexamer acts as an ATP-dependent pump, pulling dsDNA into and through the RuvAB complex. RuvB forms 2 homohexamers on either side of HJ DNA bound by 1 or 2 RuvA tetramers; 4 subunits per hexamer contact DNA at a time. Coordinated motions by a converter formed by DNA-disengaged RuvB subunits stimulates ATP hydrolysis and nucleotide exchange. Immobilization of the converter enables RuvB to convert the ATP-contained energy into a lever motion, pulling 2 nucleotides of DNA out of the RuvA tetramer per ATP hydrolyzed, thus driving DNA branch migration. The RuvB motors rotate together with the DNA substrate, which together with the progressing nucleotide cycle form the mechanistic basis for DNA recombination by continuous HJ branch migration. Branch migration allows RuvC to scan DNA until it finds its consensus sequence, where it cleaves and resolves cruciform DNA. The polypeptide is Holliday junction branch migration complex subunit RuvB (Desulfosudis oleivorans (strain DSM 6200 / JCM 39069 / Hxd3) (Desulfococcus oleovorans)).